Consider the following 222-residue polypeptide: Cysteine protease inhibitor 9 (222 aa).

The first 26 residues, 1–26 (MKSINILSFLLLSSTLSLVAFARSFS), serve as a signal peptide directing secretion. Positions 27 to 42 (SENPIVLPSTCHDDDN) are excised as a propeptide. The Vacuolar targeting signal motif lies at 29-34 (NPIVLP). 2 disulfides stabilise this stretch: C84–C136 and C185–C191.

It belongs to the protease inhibitor I3 (leguminous Kunitz-type inhibitor) family. In terms of tissue distribution, tuber.

It localises to the vacuole. Its function is as follows. Putative inhibitor of cysteine proteases. Does not inhibit papain. May protect the plant by inhibiting proteases of invading organisms. This is Cysteine protease inhibitor 9 from Solanum tuberosum (Potato).